A 306-amino-acid polypeptide reads, in one-letter code: Phospho-N-acetylmuramoyl-pentapeptide-transferase (306 aa).

Transmembrane regions (helical) follow at residues 2–22, 47–67, 71–91, 105–125, 131–151, 162–182, 185–205, 209–229, 236–256, and 284–304; these read IALLSINFVAFFVFLLILKYW, SGTPVMGGIVFILAVFPFLFF, FFISLSTILFGLLGLVDDLKL, IFLSFIITLILYVFSPHDYKI, LIIDSSILYIFLFFIILIAVP, GLAGGTSLVTLIFLLVYSFHF, IALEISLMITALLAFLWFNSH, IFMGDVGAFALGGFIASLSVV, LIFLSGIFLIESLSVFIQVFF, and IVWRFYIIHLLIIIGGLVLWY.

Belongs to the glycosyltransferase 4 family. MraY subfamily. The cofactor is Mg(2+).

It is found in the cell inner membrane. It carries out the reaction UDP-N-acetyl-alpha-D-muramoyl-L-alanyl-gamma-D-glutamyl-meso-2,6-diaminopimeloyl-D-alanyl-D-alanine + di-trans,octa-cis-undecaprenyl phosphate = di-trans,octa-cis-undecaprenyl diphospho-N-acetyl-alpha-D-muramoyl-L-alanyl-D-glutamyl-meso-2,6-diaminopimeloyl-D-alanyl-D-alanine + UMP. It functions in the pathway cell wall biogenesis; peptidoglycan biosynthesis. Functionally, catalyzes the initial step of the lipid cycle reactions in the biosynthesis of the cell wall peptidoglycan: transfers peptidoglycan precursor phospho-MurNAc-pentapeptide from UDP-MurNAc-pentapeptide onto the lipid carrier undecaprenyl phosphate, yielding undecaprenyl-pyrophosphoryl-MurNAc-pentapeptide, known as lipid I. The polypeptide is Phospho-N-acetylmuramoyl-pentapeptide-transferase (Dictyoglomus thermophilum (strain ATCC 35947 / DSM 3960 / H-6-12)).